A 181-amino-acid polypeptide reads, in one-letter code: ADP-ribosylation factor 3 (181 aa).

G2 carries the N-myristoyl glycine lipid modification. Residues 24-31 (GLDAAGKT), 67-71 (DVGGQ), and 126-129 (NKQD) each bind GTP.

The protein belongs to the small GTPase superfamily. Arf family. Interacts with PRKCABP. Interacts with PI4KB and NCS1/FREQ at the Golgi complex.

It localises to the golgi apparatus. Its subcellular location is the cytoplasm. The protein resides in the perinuclear region. Functionally, GTP-binding protein that functions as an allosteric activator of the cholera toxin catalytic subunit, an ADP-ribosyltransferase. Involved in protein trafficking; may modulate vesicle budding and uncoating within the Golgi apparatus. The sequence is that of ADP-ribosylation factor 3 (ARF3) from Bos taurus (Bovine).